Consider the following 449-residue polypeptide: UDP-N-acetylmuramoylalanine--D-glutamate ligase (449 aa).

Residue 118-124 (GSNGKTT) participates in ATP binding.

Belongs to the MurCDEF family.

The protein resides in the cytoplasm. It catalyses the reaction UDP-N-acetyl-alpha-D-muramoyl-L-alanine + D-glutamate + ATP = UDP-N-acetyl-alpha-D-muramoyl-L-alanyl-D-glutamate + ADP + phosphate + H(+). The protein operates within cell wall biogenesis; peptidoglycan biosynthesis. Cell wall formation. Catalyzes the addition of glutamate to the nucleotide precursor UDP-N-acetylmuramoyl-L-alanine (UMA). This Leuconostoc mesenteroides subsp. mesenteroides (strain ATCC 8293 / DSM 20343 / BCRC 11652 / CCM 1803 / JCM 6124 / NCDO 523 / NBRC 100496 / NCIMB 8023 / NCTC 12954 / NRRL B-1118 / 37Y) protein is UDP-N-acetylmuramoylalanine--D-glutamate ligase.